Consider the following 173-residue polypeptide: Protein-export protein SecB 1 (173 aa).

It belongs to the SecB family. Homotetramer, a dimer of dimers. One homotetramer interacts with 1 SecA dimer.

It localises to the cytoplasm. One of the proteins required for the normal export of preproteins out of the cell cytoplasm. It is a molecular chaperone that binds to a subset of precursor proteins, maintaining them in a translocation-competent state. It also specifically binds to its receptor SecA. The protein is Protein-export protein SecB 1 of Gluconobacter oxydans (strain 621H) (Gluconobacter suboxydans).